Here is a 390-residue protein sequence, read N- to C-terminus: MMIFSTAVLRLCATSRIGAVTKRASSTFLSSASSSSSSSSPTQSMPPQRYTHHQFQRHSYSTTTTTLQQQQQPSPPLSTAQLVKQLRLLTGAPMLECKKALASPDVNNDLALAQEWLRKHSSQKIGSKVAGREALEGLVGVCIDNCDGGSRGVLVKVASETDFASRSEVFTGLVQEIADAAAAAAGDGGDIVDIPTFLSNTQSITTGKLLSECLNDAVLSIRENIQLDSIVTIGTTPSSRSVIAGYVHGRAPNSTCGTSAALVEVEVLPKDGGGGDDAVLSEEEKSVAMEAAKKLAMHVVASNPLYLNPESVPVDVVEKEREILMEKMTDSNKPPEIIEKIISGQLRKFYEGICLTEQSHLVEEGNPKISKVMKGLGLVVKDFRLVGMSK.

Residues 1–24 constitute a mitochondrion transit peptide; that stretch reads MMIFSTAVLRLCATSRIGAVTKRA. Residues 30 to 40 show a composition bias toward low complexity; sequence SSASSSSSSSS. Residues 30-54 form a disordered region; it reads SSASSSSSSSSPTQSMPPQRYTHHQ.

It belongs to the EF-Ts family.

Its subcellular location is the mitochondrion. Functionally, associates with the EF-Tu.GDP complex and induces the exchange of GDP to GTP. It remains bound to the aminoacyl-tRNA.EF-Tu.GTP complex up to the GTP hydrolysis stage on the ribosome. In Thalassiosira pseudonana (Marine diatom), this protein is Elongation factor Ts 2, mitochondrial.